Here is a 100-residue protein sequence, read N- to C-terminus: Small ribosomal subunit protein uS14c (100 aa).

It belongs to the universal ribosomal protein uS14 family. As to quaternary structure, part of the 30S ribosomal subunit.

The protein localises to the plastid. Its subcellular location is the chloroplast. Its function is as follows. Binds 16S rRNA, required for the assembly of 30S particles. This is Small ribosomal subunit protein uS14c from Adiantum capillus-veneris (Maidenhair fern).